Here is a 158-residue protein sequence, read N- to C-terminus: MRKAKPKKRVILPDPVFNDQKVSKFVNHLMYDGKKNTSYEIFYAALETVKAKLPNEEKTALEIWKKALDNVTPQVEVKSRRVGGATFQVPTEIRPDRKESISMKNLILFARKRGGKSMADKLAAEIMDAFNEQGGAFKRKEDMHRMAEANRAFAHFRF.

It belongs to the universal ribosomal protein uS7 family. As to quaternary structure, part of the 30S ribosomal subunit. Contacts proteins S9 and S11.

Functionally, one of the primary rRNA binding proteins, it binds directly to 16S rRNA where it nucleates assembly of the head domain of the 30S subunit. Is located at the subunit interface close to the decoding center, probably blocks exit of the E-site tRNA. This chain is Small ribosomal subunit protein uS7, found in Bacteroides fragilis (strain YCH46).